Reading from the N-terminus, the 427-residue chain is DEAD-box ATP-dependent RNA helicase 56 (427 aa).

Residues 1-30 (MGDARDNEAYEEELLDYEEEDEKVPDSGNK) are disordered. Positions 9 to 23 (AYEEELLDYEEEDEK) are enriched in acidic residues. The Q motif signature appears at 46–74 (SGFRDFLLKPELLRAIVDSGFEHPSEVQH). A Helicase ATP-binding domain is found at 77-250 (IPQAILGMDV…KKFMQDPMEI (174 aa)). 90–97 (AKSGMGKT) lines the ATP pocket. The DECD box signature appears at 197–200 (DECD). Residues 278–423 (KLNDLLDALD…ELPEQIDTST (146 aa)) enclose the Helicase C-terminal domain.

Belongs to the DEAD box helicase family. DECD subfamily. As to quaternary structure, interacts with ALY2 and MOS11.

Its subcellular location is the nucleus. The catalysed reaction is ATP + H2O = ADP + phosphate + H(+). In terms of biological role, ATP-dependent RNA helicase involved in pre-mRNA splicing. Required for the export of mRNA out of the nucleus. In addition to ssRNA and dsRNA, binds dsDNA, but not ssDNA. This Arabidopsis thaliana (Mouse-ear cress) protein is DEAD-box ATP-dependent RNA helicase 56 (RH56).